A 98-amino-acid chain; its full sequence is NADH-ubiquinone oxidoreductase chain 4L (98 aa).

The next 3 helical transmembrane spans lie at 1–21 (MSSI…GLLM), 29–49 (SLLC…VTML), and 61–81 (VMLM…LVTV).

It belongs to the complex I subunit 4L family. In terms of assembly, core subunit of respiratory chain NADH dehydrogenase (Complex I) which is composed of 45 different subunits.

The protein localises to the mitochondrion inner membrane. It catalyses the reaction a ubiquinone + NADH + 5 H(+)(in) = a ubiquinol + NAD(+) + 4 H(+)(out). Core subunit of the mitochondrial membrane respiratory chain NADH dehydrogenase (Complex I) which catalyzes electron transfer from NADH through the respiratory chain, using ubiquinone as an electron acceptor. Part of the enzyme membrane arm which is embedded in the lipid bilayer and involved in proton translocation. The sequence is that of NADH-ubiquinone oxidoreductase chain 4L (MT-ND4L) from Tamandua tetradactyla (Southern anteater).